The sequence spans 226 residues: ATP synthase subunit a (226 aa).

6 consecutive transmembrane segments (helical) span residues 17–37 (FSYF…AMMA), 79–99 (LVAT…IPGF), 105–125 (SLNL…FEGI), 134–154 (FAHF…IEIV), 176–196 (LFLM…AYVL), and 199–219 (FMAF…LAGA).

It belongs to the ATPase A chain family. In terms of assembly, F-type ATPases have 2 components, CF(1) - the catalytic core - and CF(0) - the membrane proton channel. CF(1) has five subunits: alpha(3), beta(3), gamma(1), delta(1), epsilon(1). CF(0) has three main subunits: a(1), b(2) and c(9-12). The alpha and beta chains form an alternating ring which encloses part of the gamma chain. CF(1) is attached to CF(0) by a central stalk formed by the gamma and epsilon chains, while a peripheral stalk is formed by the delta and b chains.

Its subcellular location is the cell inner membrane. Key component of the proton channel; it plays a direct role in the translocation of protons across the membrane. In Campylobacter jejuni subsp. jejuni serotype O:23/36 (strain 81-176), this protein is ATP synthase subunit a.